Here is a 232-residue protein sequence, read N- to C-terminus: Ubiquinone biosynthesis O-methyltransferase (232 aa).

R36, G55, D76, and L120 together coordinate S-adenosyl-L-methionine.

Belongs to the methyltransferase superfamily. UbiG/COQ3 family.

It catalyses the reaction a 3-demethylubiquinol + S-adenosyl-L-methionine = a ubiquinol + S-adenosyl-L-homocysteine + H(+). It carries out the reaction a 3-(all-trans-polyprenyl)benzene-1,2-diol + S-adenosyl-L-methionine = a 2-methoxy-6-(all-trans-polyprenyl)phenol + S-adenosyl-L-homocysteine + H(+). Its pathway is cofactor biosynthesis; ubiquinone biosynthesis. Its function is as follows. O-methyltransferase that catalyzes the 2 O-methylation steps in the ubiquinone biosynthetic pathway. This chain is Ubiquinone biosynthesis O-methyltransferase, found in Pseudomonas aeruginosa (strain UCBPP-PA14).